We begin with the raw amino-acid sequence, 306 residues long: Methylated RNA-binding protein 1 (306 aa).

The YTH domain maps to 155 to 290; it reads SRFFVIKSSS…SIGISIINLF (136 aa). Residues 161–163, Asn207, and Trp231 each bind RNA; that span reads KSS.

In terms of biological role, RNA-binding protein that acts as a post-transcriptional regulator of phosphate metabolism by binding to the 3'-UTR region of PHO4 mRNA, decreasing its stability. Acts by recognizing and binding N6-methyladenosine (m6A)-containing RNAs, a modification present at internal sites of mRNAs and some non-coding RNAs. In Saccharomyces cerevisiae (strain ATCC 204508 / S288c) (Baker's yeast), this protein is Methylated RNA-binding protein 1.